The chain runs to 330 residues: Dof zinc finger protein DOF2.4 (330 aa).

Residues 14–25 (NWQQAPPSNYNH) are compositionally biased toward polar residues. A disordered region spans residues 14–70 (NWQQAPPSNYNHDGTGASANGGHVLRPQLQPQQQPQQQPHPNGSGGGGGGGGGSIRA). Over residues 40–55 (PQLQPQQQPQQQPHPN) the composition is skewed to low complexity. The span at 56 to 68 (GSGGGGGGGGGSI) shows a compositional bias: gly residues. The Dof-type zinc finger occupies 89–143 (LKCPRCESTNTKFCYFNNYSLTQPRHFCKTCRRYWTRGGALRNVPVGGGCRRNRR). 4 residues coordinate Zn(2+): Cys91, Cys94, Cys116, and Cys119. Disordered stretches follow at residues 133–165 (PVGG…SFSS) and 255–276 (QQSS…SANG). A compositionally biased stretch (low complexity) spans 146-165 (SNSNNNNNSTATSNNTSFSS). Over residues 265–276 (EDSSNPNPSANG) the composition is skewed to polar residues.

Specific to the vascular tissues. The PEAR proteins (e.g. DOF2.4, DOF5.1, DOF3.2, DOF1.1, DOF5.6 and DOF5.3) form a short-range concentration gradient that peaks at protophloem sieve elements (PSE).

It is found in the nucleus. The protein localises to the symplast. Its function is as follows. Transcription factor that binds specifically to a 5'-AA[AG]G-3' consensus core sequence. Probably involved in early processes for vascular development. The PEAR proteins (e.g. DOF2.4, DOF5.1, DOF3.2, DOF1.1, DOF5.6 and DOF5.3) activate gene expression that promotes radial growth of protophloem sieve elements. Triggers the transcription of HD-ZIP III genes, especially in the central domain of vascular tissue. The protein is Dof zinc finger protein DOF2.4 of Arabidopsis thaliana (Mouse-ear cress).